Reading from the N-terminus, the 345-residue chain is Phosphate acyltransferase (345 aa).

It belongs to the PlsX family. In terms of assembly, homodimer. Probably interacts with PlsY.

Its subcellular location is the cytoplasm. It carries out the reaction a fatty acyl-[ACP] + phosphate = an acyl phosphate + holo-[ACP]. It participates in lipid metabolism; phospholipid metabolism. Catalyzes the reversible formation of acyl-phosphate (acyl-PO(4)) from acyl-[acyl-carrier-protein] (acyl-ACP). This enzyme utilizes acyl-ACP as fatty acyl donor, but not acyl-CoA. The protein is Phosphate acyltransferase of Dichelobacter nodosus (strain VCS1703A).